The sequence spans 792 residues: Phosphoenolpyruvate synthase (792 aa).

His-421 functions as the Tele-phosphohistidine intermediate in the catalytic mechanism. Arg-511, Arg-578, Glu-680, Gly-701, Ser-702, Asn-703, and Asp-704 together coordinate substrate. Glu-680 contacts Mg(2+). Asp-704 is a Mg(2+) binding site. The active-site Proton donor is Cys-751.

It belongs to the PEP-utilizing enzyme family. In terms of assembly, homodimer. It depends on Mg(2+) as a cofactor.

It carries out the reaction pyruvate + ATP + H2O = phosphoenolpyruvate + AMP + phosphate + 2 H(+). The protein operates within carbohydrate biosynthesis; gluconeogenesis. With respect to regulation, activated by a Pi-dependent pyrophosphorylation and inactivated by an ADP-dependent phosphorylation on a regulatory threonine. Both reactions are mediated by the bifunctional serine/threonine kinase and phosphorylase PpsR. Functionally, catalyzes the phosphorylation of pyruvate to phosphoenolpyruvate. This Escherichia coli (strain K12) protein is Phosphoenolpyruvate synthase (ppsA).